Consider the following 1342-residue polypeptide: Restriction of telomere capping protein 1 (1342 aa).

The interval 1–39 is disordered; that stretch reads MSLSPHVENASIPKGSTPIPKNRNVSSIGKGEFLGSSSS. WD repeat units lie at residues 207-248, 256-296, 305-342, 367-406, 439-486, and 489-527; these read NKFS…SIDN, EHTR…SKSS, TASD…YKFA, AHTG…NAAE, NTGY…IPKH, and LSET…TVLE. Disordered stretches follow at residues 559–593, 600–619, 630–651, 736–766, and 788–831; these read PELQ…IGGI, TGLT…GPTF, ASSF…ENRE, KNAT…DDDD, and LMNE…DRSR. Residues 630–644 are compositionally biased toward low complexity; sequence ASSFNSSSASLTSLT. The segment covering 753-766 has biased composition (acidic residues); sequence DDGDDDDDDDDDDD. Low complexity predominate over residues 815–824; that stretch reads SSISSISASR. One copy of the WD 7 repeat lies at 844 to 884; it reads KIQTLVDLISIATHNASVYLSIDDLTNFKIWILIRDSLLWD. 2 disordered regions span residues 942-962 and 1014-1043; these read AFRA…SKLK and DEHE…AKSI. 2 stretches are compositionally biased toward basic and acidic residues: residues 952 to 962 and 1016 to 1028; these read DAEKKPVSKLK and HEHQ…HDSP. Residues S1037, S1081, S1088, S1090, S1124, and S1134 each carry the phosphoserine modification. 2 WD repeats span residues 1130 to 1170 and 1217 to 1256; these read SRPD…KQLY and LFGI…LITN. An RING-type; degenerate zinc finger spans residues 1294–1336; that stretch reads CVLCERPLKKLTMVILPCGHEGHFQCIQEWFLDENEQECPGGC.

The protein belongs to the WD repeat RTC1 family.

The protein localises to the vacuole. Functionally, may be involved in a process influencing telomere capping. The protein is Restriction of telomere capping protein 1 (RTC1) of Saccharomyces cerevisiae (strain Lalvin EC1118 / Prise de mousse) (Baker's yeast).